A 248-amino-acid chain; its full sequence is Triosephosphate isomerase (248 aa).

9 to 11 (NWK) is a substrate binding site. The active-site Electrophile is the His95. The Proton acceptor role is filled by Glu166. Residues Gly172, Ser210, and 231–232 (GG) each bind substrate.

Belongs to the triosephosphate isomerase family. In terms of assembly, homodimer.

The protein localises to the cytoplasm. It carries out the reaction D-glyceraldehyde 3-phosphate = dihydroxyacetone phosphate. The protein operates within carbohydrate biosynthesis; gluconeogenesis. Its pathway is carbohydrate degradation; glycolysis; D-glyceraldehyde 3-phosphate from glycerone phosphate: step 1/1. In terms of biological role, involved in the gluconeogenesis. Catalyzes stereospecifically the conversion of dihydroxyacetone phosphate (DHAP) to D-glyceraldehyde-3-phosphate (G3P). The protein is Triosephosphate isomerase of Delftia acidovorans (strain DSM 14801 / SPH-1).